The chain runs to 423 residues: Serine--tRNA ligase 1 (423 aa).

231–233 contacts L-serine; the sequence is TAE. ATP is bound at residue 262–264; that stretch reads RSE. E285 provides a ligand contact to L-serine. 349 to 352 serves as a coordination point for ATP; it reads EISS. Residue S384 coordinates L-serine.

It belongs to the class-II aminoacyl-tRNA synthetase family. Type-1 seryl-tRNA synthetase subfamily. In terms of assembly, homodimer. The tRNA molecule binds across the dimer.

It localises to the cytoplasm. The catalysed reaction is tRNA(Ser) + L-serine + ATP = L-seryl-tRNA(Ser) + AMP + diphosphate + H(+). It catalyses the reaction tRNA(Sec) + L-serine + ATP = L-seryl-tRNA(Sec) + AMP + diphosphate + H(+). It participates in aminoacyl-tRNA biosynthesis; selenocysteinyl-tRNA(Sec) biosynthesis; L-seryl-tRNA(Sec) from L-serine and tRNA(Sec): step 1/1. Functionally, catalyzes the attachment of serine to tRNA(Ser). Is also able to aminoacylate tRNA(Sec) with serine, to form the misacylated tRNA L-seryl-tRNA(Sec), which will be further converted into selenocysteinyl-tRNA(Sec). In Enterococcus faecalis (strain ATCC 700802 / V583), this protein is Serine--tRNA ligase 1.